A 448-amino-acid polypeptide reads, in one-letter code: Protein Z-dependent protease inhibitor (448 aa).

Residues 1 to 21 (MRVASSLFLPVLLTEVWLVTS) form the signal peptide. The segment at 33-70 (VHLESQDYENQTWEEYTRTDPREEEEEEEEKEEGKDEE) is disordered. Residues 54 to 63 (REEEEEEEEK) show a composition bias toward acidic residues. Residue Asn-81 is glycosylated (N-linked (GlcNAc...) asparagine). The tract at residues 140-157 (AGPLILPALFKKVKETFS) is heparin-binding. Residues Asn-184, Asn-278, and Asn-299 are each glycosylated (N-linked (GlcNAc...) asparagine).

Belongs to the serpin family. In terms of processing, phosphorylated by FAM20C in the extracellular medium. In terms of tissue distribution, detectable in liver, but not in heart, brain, spleen, lung, kidney, skeletal muscle or testes.

The protein localises to the secreted. Its function is as follows. Inhibits activity of the coagulation protease factor Xa in the presence of PROZ, calcium and phospholipids. Also inhibits factor XIa in the absence of cofactors. This chain is Protein Z-dependent protease inhibitor (Serpina10), found in Mus musculus (Mouse).